Reading from the N-terminus, the 200-residue chain is NAD(P)H dehydrogenase (quinone) (200 aa).

The Flavodoxin-like domain maps to 4–191 (VLVLYYSSYG…DIARYQGKHV (188 aa)). FMN contacts are provided by residues 10 to 15 (SSYGHV) and 79 to 81 (TRF). Tyr12 is an NAD(+) binding site. A substrate-binding site is contributed by Trp99. FMN contacts are provided by residues 114 to 120 (STGTQHG) and His135.

The protein belongs to the WrbA family. The cofactor is FMN.

It carries out the reaction a quinone + NADH + H(+) = a quinol + NAD(+). It catalyses the reaction a quinone + NADPH + H(+) = a quinol + NADP(+). In Burkholderia ambifaria (strain MC40-6), this protein is NAD(P)H dehydrogenase (quinone).